Consider the following 533-residue polypeptide: UDP-glucuronosyltransferase 1A1 (533 aa).

The signal sequence occupies residues 1-25 (MAVESQGGRPLVLGLLLCVLGPVVS). Residues Asn-102, Asn-295, and Asn-347 are each glycosylated (N-linked (GlcNAc...) asparagine). The chain crosses the membrane as a helical span at residues 491–507 (VIGFLLAVVLTVAFITF).

The protein belongs to the UDP-glycosyltransferase family. In terms of assembly, homodimer. Homooligomer. Interacts with UGT1A3, UGT1A4, UGT1A6, UGT1A7, UGT1A8, UGT1A9 and UGT1A10 to form heterodimers. Isoform 1 interacts with isoform 2/i2 suggesting that oligomerization is involved in negative regulation of transferase activity by isoform 2. Isoform 1 also interacts with respective i2 isoforms of UGT1A3, UGT1A4, UGT1A6, UGT1A7, UGT1A8, UGT1A9 and UGT1A10. Expressed in liver, colon and small intestine. Not expressed in kidney, esophagus and skin. As to expression, expressed in liver, colon, small intestine and kidney. Not expressed in esophagus and skin.

The protein resides in the endoplasmic reticulum membrane. The protein localises to the cytoplasm. It localises to the perinuclear region. The catalysed reaction is glucuronate acceptor + UDP-alpha-D-glucuronate = acceptor beta-D-glucuronoside + UDP + H(+). It catalyses the reaction 17beta-estradiol + UDP-alpha-D-glucuronate = 17beta-estradiol 3-O-(beta-D-glucuronate) + UDP + H(+). It carries out the reaction 2-hydroxyestrone + UDP-alpha-D-glucuronate = 2-hydroxyestrone 3-O-(beta-D-glucuronate) + UDP + H(+). The enzyme catalyses 2-hydroxy-17beta-estradiol + UDP-alpha-D-glucuronate = 2-hydroxy-17beta-estradiol 3-O-(beta-D-glucuronate) + UDP + H(+). The catalysed reaction is 2-methoxy-17beta-estradiol + UDP-alpha-D-glucuronate = 2-methoxy-17beta-estradiol 3-O-(beta-D-glucuronate) + UDP + H(+). It catalyses the reaction 17alpha-estradiol + UDP-alpha-D-glucuronate = 17alpha-estradiol 3-O-(beta-D-glucuronate) + UDP + H(+). It carries out the reaction 16beta,17beta-estriol + UDP-alpha-D-glucuronate = 16beta,17beta-estriol 16-O-(beta-D-glucuronate) + UDP + H(+). The enzyme catalyses losartan + UDP-alpha-D-glucuronate = losartan-2-N-beta-D-glucuronide + UDP. The catalysed reaction is prunetin + UDP-alpha-D-glucuronate = prunetin-4'-O-beta-D-glucuronide + UDP. It catalyses the reaction SN-38 + UDP-alpha-D-glucuronate = SN-38 O-beta-D-glucuronide + UDP + H(+). It carries out the reaction (4Z,15Z)-bilirubin IXalpha + UDP-alpha-D-glucuronate = (4Z,15Z)-bilirubin IXalpha C12-beta-D-glucuronoside + UDP. The enzyme catalyses (4Z,15Z)-bilirubin IXalpha + UDP-alpha-D-glucuronate = (4Z,15Z)-bilirubin IXalpha C8-beta-D-glucuronoside + UDP. The catalysed reaction is (4Z,15Z)-bilirubin IXalpha C8-beta-D-glucuronoside + UDP-alpha-D-glucuronate = (4Z,15Z)-bilirubin IXalpha C8,C12-beta-D-bisglucuronoside + UDP. It catalyses the reaction (4Z,15Z)-bilirubin IXalpha C12-beta-D-glucuronoside + UDP-alpha-D-glucuronate = (4Z,15Z)-bilirubin IXalpha C8,C12-beta-D-bisglucuronoside + UDP. It carries out the reaction 8-iso-prostaglandin F2alpha + UDP-alpha-D-glucuronate = 8-iso-prostaglandin F2alpha-glucuronide + UDP + H(+). The enzyme catalyses (5Z,8Z,11Z,14Z)-eicosatetraenoate + UDP-alpha-D-glucuronate = O-[(5Z),(8Z),(11Z),(14Z)-eicosatetraenoyl]-beta-D-glucuronate + UDP. The catalysed reaction is 15-hydroxy-(5Z,8Z,11Z,13E)-eicosatetraenoate + UDP-alpha-D-glucuronate = 15-O-(beta-D-glucuronosyl)-(5Z,8Z,11Z,14Z)-eicosatetraenoate + UDP + H(+). It catalyses the reaction 20-hydroxy-(5Z,8Z,11Z,14Z)-eicosatetraenoate + UDP-alpha-D-glucuronate = 20-O-(beta-D-glucuronosyl)-(5Z,8Z,11Z,14Z)-eicosatetraenoate + UDP + H(+). It carries out the reaction prostaglandin B1 + UDP-alpha-D-glucuronate = 15-O-(beta-D-glucuronosyl)-prostaglandin B1 + UDP + H(+). The enzyme catalyses (E)-ferulate + UDP-alpha-D-glucuronate = (E)-4-O-(beta-D-glucuronosyl)-ferulate + UDP + H(+). The catalysed reaction is (E)-ferulate + UDP-alpha-D-glucuronate = (E)-ferulic acid beta-D-glucuronate ester + UDP. UDP-glucuronosyltransferase (UGT) that catalyzes phase II biotransformation reactions in which lipophilic substrates are conjugated with glucuronic acid to increase the metabolite's water solubility, thereby facilitating excretion into either the urine or bile. Essential for the elimination and detoxification of drugs, xenobiotics and endogenous compounds. Catalyzes the glucuronidation of endogenous estrogen hormones such as estradiol, estrone and estriol. Involved in the glucuronidation of bilirubin, a degradation product occurring in the normal catabolic pathway that breaks down heme in vertebrates. Involved in the glucuronidation of arachidonic acid (AA) and AA-derived eicosanoids including 15-HETE, 20-HETE, PGB1 and F2-isoprostane (8-iso-PGF2alpha). Involved in the glucuronidation of the phytochemical ferulic acid at the phenolic or the carboxylic acid group. Also catalyzes the glucuronidation the isoflavones genistein, daidzein, glycitein, formononetin, biochanin A and prunetin, which are phytoestrogens with anticancer and cardiovascular properties. Involved in the glucuronidation of the AGTR1 angiotensin receptor antagonist losartan, a drug which can inhibit the effect of angiotensin II. Involved in the biotransformation of 7-ethyl-10-hydroxycamptothecin (SN-38), the pharmacologically active metabolite of the anticancer drug irinotecan. Its function is as follows. Lacks UGT glucuronidation activity but acts as a negative regulator of isoform 1. The polypeptide is UDP-glucuronosyltransferase 1A1 (Homo sapiens (Human)).